A 291-amino-acid chain; its full sequence is Proteasomal ubiquitin receptor ADRM1 homolog rpn1301 (291 aa).

The 114-residue stretch at M1–Q114 folds into the Pru domain. The tract at residues T135 to E162 is disordered. In terms of domain architecture, DEUBAD spans A178 to S290.

The protein belongs to the ADRM1 family. In terms of assembly, component of the 19S proteasome regulatory particle complex. The 2 S.pombe rpn13 homologs, rpn1301 and rpn1302 are present at a 0.2-1 ratio.

Its subcellular location is the cytoplasm. The protein resides in the nucleus. Functionally, component of the 26S proteasome, a multiprotein complex involved in the ATP-dependent degradation of ubiquitinated proteins. This complex plays a key role in the maintenance of protein homeostasis by removing misfolded or damaged proteins, which could impair cellular functions, and by removing proteins whose functions are no longer required. Therefore, the proteasome participates in numerous cellular processes, including cell cycle progression, apoptosis, or DNA damage repair. Within the complex, functions as a proteasomal ubiquitin receptor. This is Proteasomal ubiquitin receptor ADRM1 homolog rpn1301 (rpn1301) from Schizosaccharomyces pombe (strain 972 / ATCC 24843) (Fission yeast).